A 367-amino-acid polypeptide reads, in one-letter code: tRNA-specific 2-thiouridylase MnmA (367 aa).

ATP-binding positions include 13-20 (GLSGGVDS) and Met39. The tract at residues 99–101 (NPD) is interaction with target base in tRNA. The active-site Nucleophile is the Cys104. Cys104 and Cys200 are joined by a disulfide. Gly128 contributes to the ATP binding site. The interval 150–152 (KDQ) is interaction with tRNA. Catalysis depends on Cys200, which acts as the Cysteine persulfide intermediate. Residues 307–308 (RY) are interaction with tRNA.

The protein belongs to the MnmA/TRMU family.

It is found in the cytoplasm. The catalysed reaction is S-sulfanyl-L-cysteinyl-[protein] + uridine(34) in tRNA + AH2 + ATP = 2-thiouridine(34) in tRNA + L-cysteinyl-[protein] + A + AMP + diphosphate + H(+). In terms of biological role, catalyzes the 2-thiolation of uridine at the wobble position (U34) of tRNA, leading to the formation of s(2)U34. The chain is tRNA-specific 2-thiouridylase MnmA from Neisseria gonorrhoeae (strain ATCC 700825 / FA 1090).